Here is a 539-residue protein sequence, read N- to C-terminus: Glycerophosphoinositol inositolphosphodiesterase GDPD2 (539 aa).

The Cytoplasmic segment spans residues methionine 1–tryptophan 40. The chain crosses the membrane as a helical span at residues phenylalanine 41–leucine 61. Topologically, residues leucine 62–serine 83 are extracellular. A helical membrane pass occupies residues leucine 84–glycine 104. At leucine 105–lysine 121 the chain is on the cytoplasmic side. A helical transmembrane segment spans residues valine 122–tryptophan 142. Residues arginine 143 to glutamine 154 lie on the Extracellular side of the membrane. The helical transmembrane segment at alanine 155 to valine 175 threads the bilayer. At alanine 176 to valine 189 the chain is on the cytoplasmic side. Residues leucine 190–isoleucine 210 form a helical membrane-spanning segment. Over serine 211 to tyrosine 491 the chain is Extracellular. The 256-residue stretch at proline 225–glutamine 480 folds into the GP-PDE domain. A divalent metal cation-binding residues include glutamate 257, aspartate 259, and histidine 272. Asparagine 333 carries N-linked (GlcNAc...) asparagine glycosylation. A helical membrane pass occupies residues leucine 492–leucine 512. The Cytoplasmic portion of the chain corresponds to arginine 513–glutamate 539.

It belongs to the glycerophosphoryl diester phosphodiesterase family. The cofactor is Ca(2+). In terms of tissue distribution, detected in spleen, femur and calvaria.

The protein localises to the cell membrane. It is found in the cytoplasm. It localises to the cytoskeleton. It carries out the reaction sn-glycero-3-phospho-1D-myo-inositol + H2O = 1D-myo-inositol 1-phosphate + glycerol + H(+). Functionally, has glycerophosphoinositol inositolphosphodiesterase activity and specifically hydrolyzes glycerophosphoinositol, with no activity for other substrates such as glycerophosphoinositol 4-phosphate, glycerophosphocholine, glycerophosphoethanolamine, and glycerophosphoserine. Accelerates the program of osteoblast differentiation and growth. May play a role in remodeling of the actin cytoskeleton. The sequence is that of Glycerophosphoinositol inositolphosphodiesterase GDPD2 (Gdpd2) from Mus musculus (Mouse).